A 180-amino-acid polypeptide reads, in one-letter code: Large ribosomal subunit protein uL5 (180 aa).

Belongs to the universal ribosomal protein uL5 family. In terms of assembly, part of the 50S ribosomal subunit; part of the 5S rRNA/L5/L18/L25 subcomplex. Contacts the 5S rRNA and the P site tRNA. Forms a bridge to the 30S subunit in the 70S ribosome.

Its function is as follows. This is one of the proteins that bind and probably mediate the attachment of the 5S RNA into the large ribosomal subunit, where it forms part of the central protuberance. In the 70S ribosome it contacts protein S13 of the 30S subunit (bridge B1b), connecting the 2 subunits; this bridge is implicated in subunit movement. Contacts the P site tRNA; the 5S rRNA and some of its associated proteins might help stabilize positioning of ribosome-bound tRNAs. This is Large ribosomal subunit protein uL5 from Xanthomonas campestris pv. campestris (strain 8004).